A 131-amino-acid chain; its full sequence is MGYRKLQRTKSQRKALLRDLTTNLILNGKIQTTEARAKEVRRQAEKMITLGKRGDLAARRLAATYLRDVEDENKIKNATNAEDIVEQKAVKTLFSDVAPRFKSRNGGYTRIYKLGQRRGDAAPMALLEFVD.

Belongs to the bacterial ribosomal protein bL17 family. Part of the 50S ribosomal subunit. Contacts protein L32.

This Oenococcus oeni (strain ATCC BAA-331 / PSU-1) protein is Large ribosomal subunit protein bL17.